The following is a 272-amino-acid chain: D-aminoacyl-tRNA deacylase (272 aa).

Belongs to the DtdA deacylase family. In terms of assembly, monomer. The cofactor is Zn(2+).

It catalyses the reaction a D-aminoacyl-tRNA + H2O = a tRNA + a D-alpha-amino acid + H(+). It carries out the reaction glycyl-tRNA(Ala) + H2O = tRNA(Ala) + glycine + H(+). D-aminoacyl-tRNA deacylase with broad substrate specificity. By recycling D-aminoacyl-tRNA to D-amino acids and free tRNA molecules, this enzyme counteracts the toxicity associated with the formation of D-aminoacyl-tRNA entities in vivo. The sequence is that of D-aminoacyl-tRNA deacylase from Thermococcus kodakarensis (strain ATCC BAA-918 / JCM 12380 / KOD1) (Pyrococcus kodakaraensis (strain KOD1)).